Here is a 236-residue protein sequence, read N- to C-terminus: Large ribosomal subunit protein uL3 (236 aa).

Positions 139–163 (ARDSSTTHEHHRHVGAIGQRKTPGK) are disordered.

It belongs to the universal ribosomal protein uL3 family. In terms of assembly, part of the 50S ribosomal subunit. Forms a cluster with proteins L14 and L19.

In terms of biological role, one of the primary rRNA binding proteins, it binds directly near the 3'-end of the 23S rRNA, where it nucleates assembly of the 50S subunit. The sequence is that of Large ribosomal subunit protein uL3 from Anaeromyxobacter sp. (strain Fw109-5).